The sequence spans 123 residues: Fluoride-specific ion channel FluC (123 aa).

The next 4 membrane-spanning stretches (helical) occupy residues 1–21 (MLEI…RYLM), 32–52 (ILSL…GLVI), 64–84 (IGLL…SFSY), and 99–119 (FGYT…GIYL). 2 residues coordinate Na(+): Gly-74 and Thr-77.

The protein belongs to the fluoride channel Fluc/FEX (TC 1.A.43) family.

The protein resides in the cell inner membrane. The enzyme catalyses fluoride(in) = fluoride(out). Its activity is regulated as follows. Na(+) is not transported, but it plays an essential structural role and its presence is essential for fluoride channel function. Its function is as follows. Fluoride-specific ion channel. Important for reducing fluoride concentration in the cell, thus reducing its toxicity. The chain is Fluoride-specific ion channel FluC from Gloeothece citriformis (strain PCC 7424) (Cyanothece sp. (strain PCC 7424)).